Reading from the N-terminus, the 619-residue chain is Replication restart protein PriA (619 aa).

The region spanning 119 to 285 (LKELQKHSAS…KDKALVRLKG (167 aa)) is the Helicase ATP-binding domain. An ATP-binding site is contributed by 132–139 (GDTGSGKT). A DEAH box motif is present at residues 228 to 231 (DEEH). The Zn(2+) site is built by C336, C339, C345, C348, C363, C366, C376, and C379. The region spanning 371 to 532 (PIPKICSACQ…ELYPPFSRLC (162 aa)) is the Helicase C-terminal domain.

Belongs to the helicase family. PriA subfamily. In terms of assembly, component of the replication restart primosome. It depends on Zn(2+) as a cofactor.

It catalyses the reaction Couples ATP hydrolysis with the unwinding of duplex DNA by translocating in the 3'-5' direction.. The enzyme catalyses ATP + H2O = ADP + phosphate + H(+). In terms of biological role, initiates the restart of stalled replication forks, which reloads the replicative helicase on sites other than the origin of replication. Recognizes and binds to abandoned replication forks and remodels them to uncover a helicase loading site. Promotes assembly of the primosome at these replication forks. Functionally, important for survival of the bacteria in host cells. The polypeptide is Replication restart protein PriA (Helicobacter pylori (strain ATCC 700392 / 26695) (Campylobacter pylori)).